The following is a 53-amino-acid chain: UPF0391 membrane protein PC1_0455 (53 aa).

2 consecutive transmembrane segments (helical) span residues 4 to 24 (WGII…GGLA) and 30 to 47 (AAKI…LSLF).

It belongs to the UPF0391 family.

The protein localises to the cell membrane. This chain is UPF0391 membrane protein PC1_0455, found in Pectobacterium carotovorum subsp. carotovorum (strain PC1).